The following is a 358-amino-acid chain: Trans-enoyl reductase milB (358 aa).

NADP(+) contacts are provided by residues 48 to 51 (VDTK), 170 to 173 (ATAT), 193 to 196 (SAKH), tyrosine 211, 258 to 259 (LD), and 349 to 350 (VR).

It belongs to the zinc-containing alcohol dehydrogenase family. Monomer.

It catalyses the reaction 10 malonyl-CoA + acetyl-CoA + 3 AH2 + 8 NADPH + 18 H(+) = cordypyrone A + 3 A + 10 CO2 + 8 NADP(+) + 11 CoA + 8 H2O. It participates in secondary metabolite biosynthesis. Its function is as follows. Trans-enoyl reductase; part of the gene cluster that mediates the biosynthesis of cordypyrones A and B, 2 pyrones that show modest activities against pathogenic bacteria including methicillin-resistant Staphylococcus aureus (MRSA), Mycobacterium tuberculosis and Bacillus cereus. The HR-PKS milA catalyzes the formation of cordypyrones A via condensation of one acetate with 10 malonate units. Since milA lacks an enoyl reductase domain, the 2 beta-keto processing domains DH and KR of milA collaborate with the trans-enoyl reductase milB to catalyze the different levels of reduction. The cytochrome P450 monooxygenase milC then hydroxylates the C-22 of cordypyrones A to yield cordypyrones B. This chain is Trans-enoyl reductase milB, found in Cordyceps militaris (strain CM01) (Caterpillar fungus).